Reading from the N-terminus, the 278-residue chain is Bifunctional protein FolD (278 aa).

NADP(+)-binding positions include 165–167 (GRS) and Ser190.

This sequence belongs to the tetrahydrofolate dehydrogenase/cyclohydrolase family. As to quaternary structure, homodimer.

The catalysed reaction is (6R)-5,10-methylene-5,6,7,8-tetrahydrofolate + NADP(+) = (6R)-5,10-methenyltetrahydrofolate + NADPH. The enzyme catalyses (6R)-5,10-methenyltetrahydrofolate + H2O = (6R)-10-formyltetrahydrofolate + H(+). It participates in one-carbon metabolism; tetrahydrofolate interconversion. Catalyzes the oxidation of 5,10-methylenetetrahydrofolate to 5,10-methenyltetrahydrofolate and then the hydrolysis of 5,10-methenyltetrahydrofolate to 10-formyltetrahydrofolate. This chain is Bifunctional protein FolD, found in Clostridium tetani (strain Massachusetts / E88).